A 479-amino-acid polypeptide reads, in one-letter code: 3-isopropylmalate dehydratase large subunit (479 aa).

[4Fe-4S] cluster is bound by residues Cys-350, Cys-415, and Cys-418.

The protein belongs to the aconitase/IPM isomerase family. LeuC type 1 subfamily. Heterodimer of LeuC and LeuD. [4Fe-4S] cluster is required as a cofactor.

It catalyses the reaction (2R,3S)-3-isopropylmalate = (2S)-2-isopropylmalate. It functions in the pathway amino-acid biosynthesis; L-leucine biosynthesis; L-leucine from 3-methyl-2-oxobutanoate: step 2/4. Functionally, catalyzes the isomerization between 2-isopropylmalate and 3-isopropylmalate, via the formation of 2-isopropylmaleate. This is 3-isopropylmalate dehydratase large subunit from Caulobacter vibrioides (strain ATCC 19089 / CIP 103742 / CB 15) (Caulobacter crescentus).